Consider the following 340-residue polypeptide: Glyceraldehyde-3-phosphate dehydrogenase (340 aa).

NAD(+) contacts are provided by residues 11 to 12 (TI) and Gly-109. 138–140 (SCN) lines the D-glyceraldehyde 3-phosphate pocket. The Nucleophile role is filled by Cys-139. Residue Arg-167 participates in NAD(+) binding. 193–194 (HA) serves as a coordination point for D-glyceraldehyde 3-phosphate. Gln-300 serves as a coordination point for NAD(+).

This sequence belongs to the glyceraldehyde-3-phosphate dehydrogenase family. Homotetramer.

Its subcellular location is the cytoplasm. The catalysed reaction is D-glyceraldehyde 3-phosphate + phosphate + NADP(+) = (2R)-3-phospho-glyceroyl phosphate + NADPH + H(+). It catalyses the reaction D-glyceraldehyde 3-phosphate + phosphate + NAD(+) = (2R)-3-phospho-glyceroyl phosphate + NADH + H(+). It functions in the pathway carbohydrate degradation; glycolysis; pyruvate from D-glyceraldehyde 3-phosphate: step 1/5. The sequence is that of Glyceraldehyde-3-phosphate dehydrogenase from Saccharolobus islandicus (strain Y.N.15.51 / Yellowstone #2) (Sulfolobus islandicus).